Here is a 194-residue protein sequence, read N- to C-terminus: Large ribosomal subunit protein eL15 (194 aa).

Positions A165 to K194 are disordered.

Belongs to the eukaryotic ribosomal protein eL15 family.

The protein is Large ribosomal subunit protein eL15 of Methanococcus aeolicus (strain ATCC BAA-1280 / DSM 17508 / OCM 812 / Nankai-3).